Consider the following 740-residue polypeptide: MAETKANPFDMDSSSFDAEKYLERLLKDCSLKQIMDTEAAVVKDTQTLHSDMQTLVYENYNKFISATDTIRRMKDDFKQMETDVNLLMTKMQSITTFSEQITGTLQGTRSQLCRLSEKHSLLKRLQFLSTLPAKLKSLIEEQNYAQAVQDYLHAQKVFAQYGRQPSFDGIQRDCDAIMADLKEQLRSDFQRAGNTAQSLTEIGELLLQLDEKTSDLASEMLTCAGKRLHEQIVMLQDQTERDMLEFVDMGIDGFLNDLALVVTSYFDMFVAKHYEHERDDFQENALQELNVFLNQNIEKYLTLVQDRVESDIGYGDTQVMLRALDRLHRRLQAMRNICRGLEVQRNTVSIIISAAHQLCDAHAKNLKDHFADSLSAVRLSLVSAKSDAAAGLNLGDLISNLYVSMVEKIKGVLQDLLIFLRTDWSFNIKAEHKGALCVEGIRENLLIGFLRHIAKVMCGFGDASSSSPPNLLLVLSKTCLELEQQGVHILIALVDDLYEIDSENSATLTHETEICAEMRETAQSLLDAYVRLQGTNISQMLRKSVETRDWLNCLEPRSVRAVMKRVVEELGSIETVVASLYEANTNATSGFRTTASSDSSRKTYFSNFASTSKPQYRSNWSNYTPSQLESSYVSNIHRLFSERVEIFTSVEFTKASIIMGIIKIGLKTLLECVRLRTFSKFGLQQIQVDAHYLQMNLWRFVSDENLVNFLLDEILGSAVQRCLESVLMEPNAVEIICERG.

Coiled coils occupy residues 65–87 and 322–344; these read SATD…VNLL and RALD…LEVQ.

Belongs to the VPS51 family. Component of the Golgi-associated retrograde protein (GARP) complex.

Functionally, may act as a component of the GARP complex that is involved in retrograde transport from early and late endosomes to the trans-Golgi network (TGN). In Drosophila melanogaster (Fruit fly), this protein is Vacuolar protein sorting-associated protein 51 homolog.